The following is a 568-amino-acid chain: Methionine--tRNA ligase (568 aa).

A 'HIGH' region motif is present at residues 10-20 (PYVQSVPHLGN). Zn(2+)-binding residues include Cys-143, Cys-146, Cys-156, and Cys-159. Residues 333–337 (KFSKS) carry the 'KMSKS' region motif. Position 336 (Lys-336) interacts with ATP.

This sequence belongs to the class-I aminoacyl-tRNA synthetase family. MetG type 1 subfamily. The cofactor is Zn(2+).

The protein resides in the cytoplasm. The enzyme catalyses tRNA(Met) + L-methionine + ATP = L-methionyl-tRNA(Met) + AMP + diphosphate. Its function is as follows. Is required not only for elongation of protein synthesis but also for the initiation of all mRNA translation through initiator tRNA(fMet) aminoacylation. This is Methionine--tRNA ligase from Metallosphaera sedula (strain ATCC 51363 / DSM 5348 / JCM 9185 / NBRC 15509 / TH2).